Consider the following 563-residue polypeptide: UvrABC system protein C (563 aa).

The 76-residue stretch at 12–87 (NKSGVYIFKK…IYKYKPKYNA (76 aa)) folds into the GIY-YIG domain. Residues 194-229 (SNVISFIKLKMEQHARLLDFENAAKYRDILLNFNKV) enclose the UVR domain.

This sequence belongs to the UvrC family. In terms of assembly, interacts with UvrB in an incision complex.

Its subcellular location is the cytoplasm. The UvrABC repair system catalyzes the recognition and processing of DNA lesions. UvrC both incises the 5' and 3' sides of the lesion. The N-terminal half is responsible for the 3' incision and the C-terminal half is responsible for the 5' incision. The protein is UvrABC system protein C of Fervidobacterium nodosum (strain ATCC 35602 / DSM 5306 / Rt17-B1).